We begin with the raw amino-acid sequence, 198 residues long: Holliday junction branch migration complex subunit RuvA (198 aa).

A domain I region spans residues 1–63 (MYDYIKGQLT…EDAQLLFGFH (63 aa)). The segment at 64 to 142 (SEEEKDVFLK…EAPKEESSKP (79 aa)) is domain II. Residues 143-147 (PKAKQ) form a flexible linker region. A domain III region spans residues 148-198 (QGNEQLDEAVEALLALGYKATELKKIRAFFEGTSETAEQYIKSALKMLMKG).

It belongs to the RuvA family. In terms of assembly, homotetramer. Forms an RuvA(8)-RuvB(12)-Holliday junction (HJ) complex. HJ DNA is sandwiched between 2 RuvA tetramers; dsDNA enters through RuvA and exits via RuvB. An RuvB hexamer assembles on each DNA strand where it exits the tetramer. Each RuvB hexamer is contacted by two RuvA subunits (via domain III) on 2 adjacent RuvB subunits; this complex drives branch migration. In the full resolvosome a probable DNA-RuvA(4)-RuvB(12)-RuvC(2) complex forms which resolves the HJ.

Its subcellular location is the cytoplasm. Functionally, the RuvA-RuvB-RuvC complex processes Holliday junction (HJ) DNA during genetic recombination and DNA repair, while the RuvA-RuvB complex plays an important role in the rescue of blocked DNA replication forks via replication fork reversal (RFR). RuvA specifically binds to HJ cruciform DNA, conferring on it an open structure. The RuvB hexamer acts as an ATP-dependent pump, pulling dsDNA into and through the RuvAB complex. HJ branch migration allows RuvC to scan DNA until it finds its consensus sequence, where it cleaves and resolves the cruciform DNA. The polypeptide is Holliday junction branch migration complex subunit RuvA (Streptococcus equi subsp. zooepidemicus (strain H70)).